A 59-amino-acid polypeptide reads, in one-letter code: Large ribosomal subunit protein uL30 (59 aa).

Belongs to the universal ribosomal protein uL30 family. As to quaternary structure, part of the 50S ribosomal subunit.

The sequence is that of Large ribosomal subunit protein uL30 from Proteus mirabilis (strain HI4320).